Here is an 89-residue protein sequence, read N- to C-terminus: Small ribosomal subunit protein uS15 (89 aa).

The protein belongs to the universal ribosomal protein uS15 family. Part of the 30S ribosomal subunit. Forms a bridge to the 50S subunit in the 70S ribosome, contacting the 23S rRNA.

In terms of biological role, one of the primary rRNA binding proteins, it binds directly to 16S rRNA where it helps nucleate assembly of the platform of the 30S subunit by binding and bridging several RNA helices of the 16S rRNA. Its function is as follows. Forms an intersubunit bridge (bridge B4) with the 23S rRNA of the 50S subunit in the ribosome. In Rippkaea orientalis (strain PCC 8801 / RF-1) (Cyanothece sp. (strain PCC 8801)), this protein is Small ribosomal subunit protein uS15.